The chain runs to 1224 residues: DNA-directed RNA polymerase subunit beta'' (1224 aa).

The Zn(2+) site is built by cysteine 223, cysteine 297, cysteine 304, and cysteine 307.

It belongs to the RNA polymerase beta' chain family. RpoC2 subfamily. In terms of assembly, in plastids the minimal PEP RNA polymerase catalytic core is composed of four subunits: alpha, beta, beta', and beta''. When a (nuclear-encoded) sigma factor is associated with the core the holoenzyme is formed, which can initiate transcription. Zn(2+) serves as cofactor.

The protein localises to the plastid. Its subcellular location is the chloroplast. The catalysed reaction is RNA(n) + a ribonucleoside 5'-triphosphate = RNA(n+1) + diphosphate. Its function is as follows. DNA-dependent RNA polymerase catalyzes the transcription of DNA into RNA using the four ribonucleoside triphosphates as substrates. The chain is DNA-directed RNA polymerase subunit beta'' from Porphyra purpurea (Red seaweed).